Here is a 201-residue protein sequence, read N- to C-terminus: Small ribosomal subunit protein uS4c (201 aa).

Residues methionine 91–asparagine 153 enclose the S4 RNA-binding domain.

The protein belongs to the universal ribosomal protein uS4 family. Part of the 30S ribosomal subunit. Contacts protein S5. The interaction surface between S4 and S5 is involved in control of translational fidelity.

It localises to the plastid. It is found in the cyanelle. Its function is as follows. One of the primary rRNA binding proteins, it binds directly to 16S rRNA where it nucleates assembly of the body of the 30S subunit. In terms of biological role, with S5 and S12 plays an important role in translational accuracy. The polypeptide is Small ribosomal subunit protein uS4c (rps4) (Cyanophora paradoxa).